We begin with the raw amino-acid sequence, 1112 residues long: Phytochrome E (1112 aa).

The interval 1–20 is disordered; it reads MGFESSSSAASNMKPQPQKS. A GAF domain is found at 217–387; that stretch reads DIGALCDTVV…AFGLQLQMEL (171 aa). Cys-322 contacts phytochromobilin. PAS domains lie at 595–666 and 732–803; these read FVCE…LQGE and DYKT…LISL. One can recognise a Histidine kinase domain in the interval 877 to 1096; sequence YVRQEIKNPL…FFQVDLQVKT (220 aa).

It belongs to the phytochrome family. Homodimer. In terms of processing, contains one covalently linked phytochromobilin chromophore.

Regulatory photoreceptor which exists in two forms that are reversibly interconvertible by light: the Pr form that absorbs maximally in the red region of the spectrum and the Pfr form that absorbs maximally in the far-red region. Photoconversion of Pr to Pfr induces an array of morphogenic responses, whereas reconversion of Pfr to Pr cancels the induction of those responses. Pfr controls the expression of a number of nuclear genes including those encoding the small subunit of ribulose-bisphosphate carboxylase, chlorophyll A/B binding protein, protochlorophyllide reductase, rRNA, etc. It also controls the expression of its own gene(s) in a negative feedback fashion. The sequence is that of Phytochrome E (PHYE) from Arabidopsis thaliana (Mouse-ear cress).